Consider the following 701-residue polypeptide: Octapeptide-repeat antigen (701 aa).

13 N-linked (GlcNAc...) asparagine glycosylation sites follow: asparagine 40, asparagine 41, asparagine 76, asparagine 111, asparagine 127, asparagine 139, asparagine 181, asparagine 189, asparagine 311, asparagine 334, asparagine 344, asparagine 477, and asparagine 557. The segment at 120–140 is disordered; it reads IENEEKSNGSRKSSNKQKYNE. The segment at 641–701 is disordered; the sequence is LSGSSTGSMN…IKSGSKDHIK (61 aa). Residues 642–655 are compositionally biased toward low complexity; the sequence is SGSSTGSMNNGKSG. Tandem repeats lie at residues 653 to 660, 661 to 668, 669 to 676, 677 to 684, 685 to 692, and 693 to 700. The tract at residues 653–700 is 6 X 8 AA approximate tandem repeats; sequence KSGSKSDIKGGSKDDIKSGSKDDIKSGSKADIKSGSKDDIKSGSKDHI. A compositionally biased stretch (basic and acidic residues) spans 656–701; it reads SKSDIKGGSKDDIKSGSKDDIKSGSKADIKSGSKDDIKSGSKDHIK.

Belongs to the ATP-dependent AMP-binding enzyme family.

Its subcellular location is the parasitophorous vacuole. This Plasmodium falciparum (isolate NF7 / Ghana) protein is Octapeptide-repeat antigen.